An 81-amino-acid polypeptide reads, in one-letter code: MQSLEIVAIVELVVAAIIAIVVWTIVFIEYRKILRQRKIDRLIDRIREREEDNGNESEGDQEELSALVEMGHHAPWNVDDL.

The Extracellular segment spans residues 1-7 (MQSLEIV). Residues 8 to 28 (AIVELVVAAIIAIVVWTIVFI) traverse the membrane as a helical segment. At 29–81 (EYRKILRQRKIDRLIDRIREREEDNGNESEGDQEELSALVEMGHHAPWNVDDL) the chain is on the cytoplasmic side. Positions 50-81 (EEDNGNESEGDQEELSALVEMGHHAPWNVDDL) are disordered. The span at 53 to 63 (NGNESEGDQEE) shows a compositional bias: acidic residues. Ser-57 carries the post-translational modification Phosphoserine; by host CK2.

The protein belongs to the HIV-1 VPU protein family. In terms of assembly, homopentamer. Interacts with host CD4 and BRTC; these interactions induce proteasomal degradation of CD4. Interacts with host BST2; this interaction leads to the degradation of host BST2. Interacts with host FBXW11. Interacts with host AP1M1; this interaction plays a role in the mistrafficking and subsequent degradation of host BST2. Interacts with host RANBP2; this interaction allows Vpu to down-regulate host BLM sumoylation. Phosphorylated by host CK2. This phosphorylation is necessary for interaction with human BTRC and degradation of CD4.

The protein localises to the host membrane. Its activity is regulated as follows. Ion channel activity is inhibited by hexamethylene amiloride in vitro. Its function is as follows. Enhances virion budding by targeting host CD4 and Tetherin/BST2 to proteasome degradation. Degradation of CD4 prevents any unwanted premature interactions between viral Env and its host receptor CD4 in the endoplasmic reticulum. Degradation of antiretroviral protein Tetherin/BST2 is important for virion budding, as BST2 tethers new viral particles to the host cell membrane. Mechanistically, Vpu bridges either CD4 or BST2 to BTRC, a substrate recognition subunit of the Skp1/Cullin/F-box protein E3 ubiquitin ligase, induces their ubiquitination and subsequent proteasomal degradation. The alteration of the E3 ligase specificity by Vpu seems to promote the degradation of host IKBKB, leading to NF-kappa-B down-regulation and subsequent apoptosis. Acts as a viroporin that forms an oligomeric ion channel in membranes. Modulates the host DNA repair mechanisms to promote degradation of nuclear viral cDNA in cells that are already productively infected in order to suppress immune sensing and proviral hyper-integration (superinfection). Manipulates PML-NBs and modulates SUMOylation of host BLM protein thereby enhancing its DNA-end processing activity toward viral unintegrated linear DNA. Also inhibits RAD52-mediated homologous repair of viral cDNA, preventing the generation of dead-end circular forms of single copies of the long terminal repeat and permitting sustained nucleolytic attack. The chain is Protein Vpu from Homo sapiens (Human).